We begin with the raw amino-acid sequence, 1383 residues long: DNA-directed RNA polymerase subunit beta (1383 aa).

Belongs to the RNA polymerase beta chain family. As to quaternary structure, the RNAP catalytic core consists of 2 alpha, 1 beta, 1 beta' and 1 omega subunit. When a sigma factor is associated with the core the holoenzyme is formed, which can initiate transcription.

It carries out the reaction RNA(n) + a ribonucleoside 5'-triphosphate = RNA(n+1) + diphosphate. Functionally, DNA-dependent RNA polymerase catalyzes the transcription of DNA into RNA using the four ribonucleoside triphosphates as substrates. The chain is DNA-directed RNA polymerase subunit beta from Bartonella henselae (strain ATCC 49882 / DSM 28221 / CCUG 30454 / Houston 1) (Rochalimaea henselae).